We begin with the raw amino-acid sequence, 1570 residues long: Mediator of RNA polymerase II transcription subunit 1 (1570 aa).

2 short sequence motifs (LXXLL motif) span residues 585–589 and 626–630; these read LTSLL and LMNLL. 3 disordered regions span residues 592–687, 771–880, and 922–1561; these read TNNT…TEDD, SKLS…FKDF, and SKTL…MDDD. Residues 675–687 are compositionally biased toward basic and acidic residues; it reads TGAEKMKNQTEDD. Polar residues-rich tracts occupy residues 788 to 801, 832 to 861, and 931 to 942; these read RDSS…STLF, GSPN…QSGF, and QETQSRSQSPLL. Residues 946–958 show a composition bias toward basic and acidic residues; that stretch reads LGKDRPQKQKVKE. A compositionally biased stretch (gly residues) spans 961 to 970; the sequence is NGGGAGGGLS. Composition is skewed to low complexity over residues 1022 to 1035, 1066 to 1082, 1089 to 1113, 1121 to 1140, and 1152 to 1161; these read PTST…GTSG, SSHG…SSSS, SSLS…MKIG, SGQS…SMGK, and SSNVSNSSGS. Polar residues predominate over residues 1173–1190; sequence MNPSLSKPNISPSHSRPS. Gly residues predominate over residues 1217-1228; the sequence is GSGGQHLSGGGS. The span at 1229 to 1271 shows a compositional bias: low complexity; that stretch reads NSTTKSSSGLVSSGSLSQKPNSSSSSSSSSSSSSSSSSSSSSS. The span at 1276-1287 shows a compositional bias: polar residues; sequence VSQNLHGNSKGK. The segment covering 1308–1328 has biased composition (gly residues); sequence VGTGGPGSEDPMDGGGGGGST. The segment covering 1347–1359 has biased composition (basic and acidic residues); that stretch reads PTKREKSEKDKSK. 2 stretches are compositionally biased toward polar residues: residues 1418 to 1433 and 1441 to 1455; these read SQMQ…SGST and PSHN…QALD. Residues 1459 to 1469 are compositionally biased toward low complexity; it reads ESGSSSIAEKS. Residues 1494 to 1503 are compositionally biased toward basic residues; that stretch reads KHKKHKKEKK. Residues 1504–1516 are compositionally biased toward basic and acidic residues; that stretch reads RLKDKDRDREKKK. Low complexity predominate over residues 1536-1546; it reads MAMSGGSMMSS.

It belongs to the Mediator complex subunit 1 family. As to quaternary structure, component of the Mediator complex.

The protein localises to the nucleus. Component of the Mediator complex, a coactivator involved in the regulated transcription of nearly all RNA polymerase II-dependent genes. Mediator functions as a bridge to convey information from gene-specific regulatory proteins to the basal RNA polymerase II transcription machinery. Mediator is recruited to promoters by direct interactions with regulatory proteins and serves as a scaffold for the assembly of a functional preinitiation complex with RNA polymerase II and the general transcription factors. The chain is Mediator of RNA polymerase II transcription subunit 1 (med1) from Xenopus laevis (African clawed frog).